Here is a 272-residue protein sequence, read N- to C-terminus: Cerberus (272 aa).

Residues 1-17 form the signal peptide; it reads MHLLLVQLLVLLPLGKA. Cystine bridges form between C162-C209, C176-C223, C186-C239, and C190-C241. A CTCK domain is found at 162–246; it reads CRTVPFNQTI…EECQCMVKTE (85 aa). N168 and N222 each carry an N-linked (GlcNAc...) asparagine glycan.

Belongs to the DAN family. As to quaternary structure, forms monomers and predominantly dimers. In terms of processing, N-glycosylated.

It localises to the secreted. Its function is as follows. Cytokine that may play a role in anterior neural induction and somite formation during embryogenesis in part, through a BMP-inhibitory mechanism. Can regulate Nodal signaling during gastrulation as well as the formation and patterning of the primitive streak. The polypeptide is Cerberus (Cer1) (Mus musculus (Mouse)).